Consider the following 209-residue polypeptide: 3-demethoxyubiquinol 3-hydroxylase (209 aa).

Fe cation is bound by residues Glu-58, Glu-88, His-91, Glu-140, Glu-172, and His-175.

This sequence belongs to the COQ7 family. Fe cation serves as cofactor.

It localises to the cell membrane. The enzyme catalyses a 5-methoxy-2-methyl-3-(all-trans-polyprenyl)benzene-1,4-diol + AH2 + O2 = a 3-demethylubiquinol + A + H2O. Its pathway is cofactor biosynthesis; ubiquinone biosynthesis. Its function is as follows. Catalyzes the hydroxylation of 2-nonaprenyl-3-methyl-6-methoxy-1,4-benzoquinol during ubiquinone biosynthesis. The protein is 3-demethoxyubiquinol 3-hydroxylase of Polaromonas sp. (strain JS666 / ATCC BAA-500).